The following is a 781-amino-acid chain: Probable serine/threonine-protein kinase C70.05c (781 aa).

Disordered regions lie at residues 1-315 (MPSD…PLVS) and 368-417 (YSGK…TNIS). The span at 21-31 (ESPSSRSIGSG) shows a compositional bias: low complexity. The span at 43 to 63 (FKNSFLSRKNSSQIKSPSDYK) shows a compositional bias: polar residues. Positions 64–73 (SSAHEQRVNH) are enriched in basic and acidic residues. The segment covering 74–92 (TTDSMAHVPGNNSPLQTPQ) has biased composition (polar residues). Ser-94 carries the phosphoserine modification. The segment covering 112-121 (SRHHKPHHSG) has biased composition (basic residues). 3 stretches are compositionally biased toward polar residues: residues 136-146 (SNANSPTSESP), 161-195 (KNTSSHPSSPVNGKSSDIHKSQSYQHLKNSPPNSR), and 206-228 (NSASHNLGSTKSPNGNAKESLSR). A Phosphoserine modification is found at Ser-253. The segment covering 272–304 (PLTASPTPSSPTGTPNSMSKSPSLSSLASTGAS) has biased composition (low complexity). Over residues 379-406 (NVGSSANTAPNSPTSANSSEGNQGNGPT) the composition is skewed to polar residues. The region spanning 432–742 (AKRVVPRLSA…AQEALNLPFV (311 aa)) is the Protein kinase domain. ATP is bound by residues 452–460 (MGSGATAVI) and Lys-480. Catalysis depends on Asp-584, which acts as the Proton acceptor.

Belongs to the protein kinase superfamily. Ser/Thr protein kinase family.

The protein localises to the cytoplasm. The enzyme catalyses L-seryl-[protein] + ATP = O-phospho-L-seryl-[protein] + ADP + H(+). The catalysed reaction is L-threonyl-[protein] + ATP = O-phospho-L-threonyl-[protein] + ADP + H(+). In Schizosaccharomyces pombe (strain 972 / ATCC 24843) (Fission yeast), this protein is Probable serine/threonine-protein kinase C70.05c.